Reading from the N-terminus, the 882-residue chain is DNA mismatch repair protein MutS (882 aa).

Position 627 to 634 (627 to 634) interacts with ATP; sequence GPNMAGKS.

The protein belongs to the DNA mismatch repair MutS family.

In terms of biological role, this protein is involved in the repair of mismatches in DNA. It is possible that it carries out the mismatch recognition step. This protein has a weak ATPase activity. In Anaeromyxobacter dehalogenans (strain 2CP-C), this protein is DNA mismatch repair protein MutS.